The chain runs to 59 residues: MAVPQRKVTHSRKAKRGSHLHLSIPTLVACKRCGKKITPHRVCNSCGYYKNKKVPQIEA.

Belongs to the bacterial ribosomal protein bL32 family.

This chain is Large ribosomal subunit protein bL32, found in Malacoplasma penetrans (strain HF-2) (Mycoplasma penetrans).